The chain runs to 834 residues: MSDDSFSSDEDWDELDTQVVDKIENEYHNNTIGLNGYSVDEYFDANDSNRYRLQHELDESAAQQWVYPINVSFRDYQFNIVQKALFENVLVALPTGLGKTFIAAVVMMNYLRWFPKSYIVFMAPTKPLVTQQMEACYKITGIPKSQTAELSGHVPVTTRNQYYQSRNVFFVTPQTILNDIKHGICDRTRISCLVIDEAHRSTGNYAYVEVVHLLSLSNKNFRILALSATPGNKLEAIQNVIDSLHISRIEIRTENSIDISQYVQKKEVDFFPVDLSAEITDIRDRFSSILEPMLQKLNKGNYYRIQNAKDITSFTVVQAKQAFLAMSGQNFPANQKWDILNTFDALATFAYPLNLLLNHGIRPFYQKLREVEEECFVGRSGYKKRIINHENYRPLMDDIEILLRDQSFVGHPKLEHLERIVTEYFEKEQTKDTRIMIFVEIRSSAEEILRFLGKFYPNVRPAIFIGQSAVRKAAGMSQKLQNETVKQFQKGEVNTLIATSIGEEGLDIGEVDMIICYDASASPIRMLQRMGRTGRKRKGYIYMLLTRGKEEAKWERAKDAYRTLQDNIVSGRGLSLSEKSYRILPEKFRPVCDKRVIEIPKENEEVVVAPKKVQLRTKIKKKFFMPENALNGFITASALGKPKRALAKSEESPFEICPVTYSIEQEKKLEKYKRVCLRGLDIHRNRRLSQLSVTGRIPHSLATKSIHSFLKHLNTIDSQKAQEWRREINNQFQVSNINSTDRDTKQPKMHDFRQPLHPNPMTTLKRKGQHNSFSYDKSTLFYDNNNNLEEDLPDVNISISSRNEEASKTKPFDDRQQRLQQLVEKRKRMKGMLI.

Positions 80 to 248 (IVQKALFENV…NVIDSLHISR (169 aa)) constitute a Helicase ATP-binding domain. Residue 93–100 (LPTGLGKT) participates in ATP binding. Positions 196–199 (DEAH) match the DEAH box motif. The Helicase C-terminal domain occupies 416–582 (HLERIVTEYF…GLSLSEKSYR (167 aa)). The tract at residues 650–690 (EESPFEICPVTYSIEQEKKLEKYKRVCLRGLDIHRNRRLSQ) is interaction with MHF complex. The tract at residues 738 to 769 (NSTDRDTKQPKMHDFRQPLHPNPMTTLKRKGQ) is disordered. Over residues 740–754 (TDRDTKQPKMHDFRQ) the composition is skewed to basic and acidic residues.

This sequence belongs to the DEAD box helicase family. DEAH subfamily. FANCM sub-subfamily.

Its subcellular location is the cytoplasm. The protein resides in the nucleus. It is found in the nucleolus. The catalysed reaction is ATP + H2O = ADP + phosphate + H(+). In terms of biological role, ATP-dependent DNA helicase involved in DNA damage repair by homologous recombination and in genome maintenance. Capable of unwinding D-loops. Plays a role in limiting crossover recombination during mitotic DNA double-strand break (DSB) repair. Component of a FANCM-MHF complex which promotes gene conversion at blocked replication forks, probably by reversal of the stalled fork. FANCM-MHF also promotes non-crossover recombination in meiotic cells. This is ATP-dependent DNA helicase fml1 from Schizosaccharomyces pombe (strain 972 / ATCC 24843) (Fission yeast).